A 166-amino-acid chain; its full sequence is Ribosome maturation factor RimP (166 aa).

The protein belongs to the RimP family.

It is found in the cytoplasm. Functionally, required for maturation of 30S ribosomal subunits. The chain is Ribosome maturation factor RimP from Psychrobacter arcticus (strain DSM 17307 / VKM B-2377 / 273-4).